Here is a 383-residue protein sequence, read N- to C-terminus: Na(+)/H(+) antiporter NhaA (383 aa).

11 helical membrane-spanning segments follow: residues 19 to 39 (AGGV…NSPL), 56 to 76 (VLHG…GLEI), 92 to 112 (ILPG…FLAL), 122 to 142 (GWAV…ALLG), 151 to 171 (IFLT…IALF), 174 to 194 (AKLS…LAAL), 212 to 232 (LWGA…ALAL), 255 to 275 (VGYG…FAGL), 292 to 312 (LLFG…WLGF), 326 to 346 (GVAV…ALAF), and 356 to 376 (VKVG…LVLL).

Belongs to the NhaA Na(+)/H(+) (TC 2.A.33) antiporter family.

The protein resides in the cell inner membrane. The catalysed reaction is Na(+)(in) + 2 H(+)(out) = Na(+)(out) + 2 H(+)(in). In terms of biological role, na(+)/H(+) antiporter that extrudes sodium in exchange for external protons. This Paramagnetospirillum magneticum (strain ATCC 700264 / AMB-1) (Magnetospirillum magneticum) protein is Na(+)/H(+) antiporter NhaA.